A 187-amino-acid chain; its full sequence is Ubiquinone biosynthesis protein COQ4 homolog, mitochondrial (187 aa).

Zn(2+)-binding residues include H77, D78, H81, and E93.

Belongs to the COQ4 family. In terms of assembly, component of a multi-subunit COQ enzyme complex. Zn(2+) is required as a cofactor.

It localises to the mitochondrion inner membrane. It carries out the reaction a 4-hydroxy-3-methoxy-5-(all-trans-polyprenyl)benzoate + H(+) = a 2-methoxy-6-(all-trans-polyprenyl)phenol + CO2. It participates in cofactor biosynthesis; ubiquinone biosynthesis. Its function is as follows. Lyase that catalyzes the C1-decarboxylation of 4-hydroxy-3-methoxy-5-(all-trans-polyprenyl)benzoic acid into 2-methoxy-6-(all-trans-polyprenyl)phenol during ubiquinone biosynthesis. This Leishmania braziliensis protein is Ubiquinone biosynthesis protein COQ4 homolog, mitochondrial.